The sequence spans 266 residues: Phosphatidylglycerol--prolipoprotein diacylglyceryl transferase (266 aa).

Transmembrane regions (helical) follow at residues 17–37 (LKIHWYGLMYLIGIGGAWLLA), 56–76 (LVFWVACGVILGGRLGYVLFY), 92–112 (WKGGMSFHGGLLGVMLAVWWF), 120–140 (FFQLMDFIAPLVPIGLGAGRI), 171–191 (PSQLYQFALEGVALFVILWLF), 199–219 (ASVSGLFVLCYGIFRFVVEFV), and 233–253 (WLTMGQVLCVPMVLAGIALMV). Arg139 serves as a coordination point for a 1,2-diacyl-sn-glycero-3-phospho-(1'-sn-glycerol).

Belongs to the Lgt family.

The protein localises to the cell inner membrane. The enzyme catalyses L-cysteinyl-[prolipoprotein] + a 1,2-diacyl-sn-glycero-3-phospho-(1'-sn-glycerol) = an S-1,2-diacyl-sn-glyceryl-L-cysteinyl-[prolipoprotein] + sn-glycerol 1-phosphate + H(+). Its pathway is protein modification; lipoprotein biosynthesis (diacylglyceryl transfer). Its function is as follows. Catalyzes the transfer of the diacylglyceryl group from phosphatidylglycerol to the sulfhydryl group of the N-terminal cysteine of a prolipoprotein, the first step in the formation of mature lipoproteins. This Pseudomonas aeruginosa (strain UCBPP-PA14) protein is Phosphatidylglycerol--prolipoprotein diacylglyceryl transferase.